The chain runs to 504 residues: 2-isopropylmalate synthase (504 aa).

The Pyruvate carboxyltransferase domain maps to 6–267 (IIVFDTTLRD…YTDINFKEIY (262 aa)). The Mn(2+) site is built by aspartate 15, histidine 201, histidine 203, and asparagine 237. Residues 391-504 (EIIALSSSEC…ALNSYISMKQ (114 aa)) are regulatory domain.

Belongs to the alpha-IPM synthase/homocitrate synthase family. LeuA type 1 subfamily. Homodimer. Requires Mn(2+) as cofactor.

The protein resides in the cytoplasm. The catalysed reaction is 3-methyl-2-oxobutanoate + acetyl-CoA + H2O = (2S)-2-isopropylmalate + CoA + H(+). The protein operates within amino-acid biosynthesis; L-leucine biosynthesis; L-leucine from 3-methyl-2-oxobutanoate: step 1/4. Its function is as follows. Catalyzes the condensation of the acetyl group of acetyl-CoA with 3-methyl-2-oxobutanoate (2-ketoisovalerate) to form 3-carboxy-3-hydroxy-4-methylpentanoate (2-isopropylmalate). This chain is 2-isopropylmalate synthase, found in Campylobacter hominis (strain ATCC BAA-381 / DSM 21671 / CCUG 45161 / LMG 19568 / NCTC 13146 / CH001A).